Here is a 609-residue protein sequence, read N- to C-terminus: Tyrosyl-DNA phosphodiesterase 1 (609 aa).

A compositionally biased stretch (polar residues) spans 1–12; the sequence is MSQESSYGKWTI. Positions 1–154 are disordered; that stretch reads MSQESSYGKW…EYETSGEGQD (154 aa). Phosphoserine is present on residues serine 61, serine 119, and serine 132. Over residues 127–143 the composition is skewed to basic and acidic residues; the sequence is KVEDRSPPDSHRAQRAD. Position 148 is a phosphothreonine (threonine 148). Serine 149 is modified (phosphoserine). Residue histidine 264 is the Nucleophile of the active site. Lysine 266 contacts substrate. Positions 401-404 are interaction with DNA; the sequence is SIGS. The Proton donor/acceptor role is filled by histidine 494. Lysine 496 is a binding site for substrate.

This sequence belongs to the tyrosyl-DNA phosphodiesterase family. In terms of assembly, monomer.

It localises to the nucleus. The protein localises to the cytoplasm. Functionally, DNA repair enzyme that can remove a variety of covalent adducts from DNA through hydrolysis of a 3'-phosphodiester bond, giving rise to DNA with a free 3' phosphate. Catalyzes the hydrolysis of dead-end complexes between DNA and the topoisomerase I active site tyrosine residue. Hydrolyzes 3'-phosphoglycolates on protruding 3' ends on DNA double-strand breaks due to DNA damage by radiation and free radicals. Acts on blunt-ended double-strand DNA breaks and on single-stranded DNA. Has low 3'exonuclease activity and can remove a single nucleoside from the 3'end of DNA and RNA molecules with 3'hydroxyl groups. Has no exonuclease activity towards DNA or RNA with a 3'phosphate. The protein is Tyrosyl-DNA phosphodiesterase 1 (Tdp1) of Rattus norvegicus (Rat).